Reading from the N-terminus, the 549-residue chain is Lipase 3 (549 aa).

The signal sequence occupies residues 1-15 (MKLALALSLIASVAA). Cys-75 and Cys-112 form a disulfide bridge. Ser-224 serves as the catalytic Acyl-ester intermediate. Cys-283 and Cys-292 are oxidised to a cystine. An N-linked (GlcNAc...) asparagine glycan is attached at Asn-329. The active-site Charge relay system is the Glu-356. An N-linked (GlcNAc...) asparagine glycan is attached at Asn-366. His-464 serves as the catalytic Charge relay system.

The protein belongs to the type-B carboxylesterase/lipase family. As to quaternary structure, monomer and homodimer.

The catalysed reaction is a triacylglycerol + H2O = a diacylglycerol + a fatty acid + H(+). This is Lipase 3 (LIP3) from Diutina rugosa (Yeast).